Reading from the N-terminus, the 528-residue chain is Golgi resident protein GCP60 (528 aa).

The tract at residues 1 to 71 (MAAVLNAERL…EAAAGGAAEE (71 aa)) is disordered. Residue A2 is modified to N-acetylalanine; in Golgi resident protein GCP60, N-terminally processed. S13 is subject to Phosphoserine. T18 carries the phosphothreonine modification. Phosphoserine is present on residues S20, S43, and S47. The segment covering 34 to 45 (LLPPPLPPPSPP) has biased composition (pro residues). The span at 54–69 (SGEQPEPGEAAAGGAA) shows a compositional bias: low complexity. In terms of domain architecture, ACB spans 83-174 (LEELYGLALR…LNRCCHLFST (92 aa)). Residues 174–257 (TYVASHKIEK…AALNSQTAVQ (84 aa)) are a coiled coil. The disordered stretch occupies residues 182-230 (EKEEQEKKRKEEEERRRREEEERERLQKEEEKRRREEEERLRREEEERR). The interval 182 to 240 (EKEEQEKKRKEEEERRRREEEERERLQKEEEKRRREEEERLRREEEERRRIEEERLRLE) is charged amino-acid region (CAR). The q domain; Interaction with PI4KB, TBC1D22A and TBC1D22B stretch occupies residues 241–308 (QQKQQIMAAL…QQQAALQKQQ (68 aa)). Positions 335 to 362 (NGQAKTHTDSSEKELEPEAAEEALENGP) are disordered. Positions 340–350 (THTDSSEKELE) are enriched in basic and acidic residues. The GOLD domain maps to 384–526 (KEKIQQDADS…SKSVYYRVYY (143 aa)). The membrane-binding stretch occupies residues 514–516 (LWR).

In terms of assembly, homodimer. Interacts with the C-terminal cytoplasmic domain of giantin/GOLGB1. Interacts with PBR and PKA regulatory subunit RI-alpha. Does not interact with PKA regulatory subunit RI-beta nor PKA regulatory subunit RII-alpha. Interacts (via Q domain) with PI4KB (via N-terminus). Interacts (via Q domain) with TBC1D22A and TBC1D22B; interactions with PI4KB and with TBC1D22A and TBC1D22B are mutually exclusive. Interacts with C10ORF76 and RAB11B. (Microbial infection) Interacts (via GOLD domain) with 3A proteins from various picornaviruses, including poliovirus, enterovirus A71, enterovirus D68, hepatitis A virus, human parechovirus 1, poliovirus, Human rhinovirus-14 (Hrv-14), coysackievirus B2, coysackievirus B3, coysackievirus B5, Aichi virus and human klassevirus. Interacts (via GOLD domain) with Aichi virus protein 3A; this interaction allows the formation of a 3A/ACBD3/PI4KB complex in order to synthesize PI4P at the viral RNA replication sites. Interacts with Aichi virus protein 2B. Interacts with Aichi virus protein 2C. In terms of tissue distribution, ubiquitous, with highest expression in testis and ovary.

It localises to the golgi apparatus membrane. The protein resides in the mitochondrion. Involved in the maintenance of Golgi structure by interacting with giantin, affecting protein transport between the endoplasmic reticulum and Golgi. Involved in hormone-induced steroid biosynthesis in testicular Leydig cells. Recruits PI4KB to the Golgi apparatus membrane; enhances the enzyme activity of PI4KB activity via its membrane recruitment thereby increasing the local concentration of the substrate in the vicinity of the kinase. Functionally, (Microbial infection) Plays an essential role in Aichi virus RNA replication by recruiting PI4KB at the viral replication sites. The chain is Golgi resident protein GCP60 (ACBD3) from Homo sapiens (Human).